The sequence spans 198 residues: Large ribosomal subunit protein bL12m (198 aa).

Residues 1–36 constitute a mitochondrion transit peptide; the sequence is MLPAAARPLWGPCLGLRAAAFRLARRQVPCVCAVRH. K125, K138, K142, and K144 each carry N6-acetyllysine. An N6-acetyllysine; alternate modification is found at K150. K150 carries the N6-succinyllysine; alternate modification. K150 is covalently cross-linked (Glycyl lysine isopeptide (Lys-Gly) (interchain with G-Cter in ubiquitin)). An N6-succinyllysine modification is found at K162. 2 positions are modified to N6-acetyllysine: K163 and K173. Residue K178 is modified to N6-acetyllysine; alternate. An N6-succinyllysine; alternate modification is found at K178. The residue at position 185 (K185) is an N6-acetyllysine.

This sequence belongs to the bacterial ribosomal protein bL12 family. In terms of assembly, component of the mitochondrial large ribosomal subunit (mt-LSU). Mature mammalian 55S mitochondrial ribosomes consist of a small (28S) and a large (39S) subunit. The 28S small subunit contains a 12S ribosomal RNA (12S mt-rRNA) and 30 different proteins. The 39S large subunit contains a 16S rRNA (16S mt-rRNA), a copy of mitochondrial valine transfer RNA (mt-tRNA(Val)), which plays an integral structural role, and 52 different proteins. bL12m interacts with NOA1. Post-translationally, two mature forms are produced by differential two-step proteolytic cleavage. Cleaved by the mitochondrial processing protease to produce the long mature form and subsequently by the mitochondrial intermediate protease to produce the short mature form. In the presence of CUL3, undergoes 'Lys-63'-linked ubiquitination at Lys-150 which results in proteasomal degradation.

The protein localises to the mitochondrion matrix. Functionally, as a component of the mitochondrial large ribosomal subunit, plays a role in mitochondrial translation. When present in mitochondria as a free protein not associated with the ribosome, associates with mitochondrial RNA polymerase POLRMT to activate transcription. Required for POLRMT stability. The protein is Large ribosomal subunit protein bL12m (MRPL12) of Homo sapiens (Human).